A 1379-amino-acid chain; its full sequence is DNA-directed RNA polymerase subunit beta (1379 aa).

It belongs to the RNA polymerase beta chain family. As to quaternary structure, the RNAP catalytic core consists of 2 alpha, 1 beta, 1 beta' and 1 omega subunit. When a sigma factor is associated with the core the holoenzyme is formed, which can initiate transcription.

It catalyses the reaction RNA(n) + a ribonucleoside 5'-triphosphate = RNA(n+1) + diphosphate. Functionally, DNA-dependent RNA polymerase catalyzes the transcription of DNA into RNA using the four ribonucleoside triphosphates as substrates. The protein is DNA-directed RNA polymerase subunit beta of Allorhizobium ampelinum (strain ATCC BAA-846 / DSM 112012 / S4) (Agrobacterium vitis (strain S4)).